The primary structure comprises 218 residues: MFEYLIKFYPKILFIVEGTLVTLKYSVIAVIFGLVIGMLLAICKVNKNRALRLFANFYTSIFRGTPLLIQLSIIYFASPYIIGVKFSVFMAGAISFSLNSGAYVSEVIRAGINAVDKGQFEAAVALAIPKFLIMKDIILPQAVKNIFPSLVNELVNLVKESAIISMLGEMDLMRRAQIVSIETYNYFFPMFIAACCYYILVMLISFIAKIIEKKMIVN.

In terms of domain architecture, ABC transmembrane type-1 spans 19–208 (TLVTLKYSVI…ILVMLISFIA (190 aa)). 4 consecutive transmembrane segments (helical) span residues 25-45 (YSVI…ICKV), 57-79 (FYTS…FASP), 86-108 (FSVF…SEVI), and 187-207 (FFPM…ISFI).

This sequence belongs to the binding-protein-dependent transport system permease family. HisMQ subfamily.

The protein resides in the cell inner membrane. Part of the binding-protein-dependent transport system for glutamine; probably responsible for the translocation of the substrate across the membrane. The polypeptide is Putative glutamine transport system permease protein GlnP (glnP) (Rickettsia felis (strain ATCC VR-1525 / URRWXCal2) (Rickettsia azadi)).